We begin with the raw amino-acid sequence, 349 residues long: DNA fragmentation factor subunit beta (349 aa).

The CIDE-N domain occupies 7–83 (QPKCVKLRAL…LLTAGETWHG (77 aa)). Residues 319–349 (RSRIYRPQTGSRRKQPPRKQPPRKRPPRKRQ) are disordered. Residues 329–349 (SRRKQPPRKQPPRKRPPRKRQ) show a composition bias toward basic residues.

In terms of assembly, heterodimer of DFFA and DFFB. Interacts with H1-1.

Its subcellular location is the cytoplasm. It localises to the nucleus. With respect to regulation, inhibited by DFFA (DFF45). In terms of biological role, nuclease that induces DNA fragmentation and chromatin condensation during apoptosis. Degrades naked DNA and induces apoptotic morphology. The protein is DNA fragmentation factor subunit beta (Dffb) of Rattus norvegicus (Rat).